Reading from the N-terminus, the 103-residue chain is Large ribosomal subunit protein bL21 (103 aa).

Belongs to the bacterial ribosomal protein bL21 family. As to quaternary structure, part of the 50S ribosomal subunit. Contacts protein L20.

Functionally, this protein binds to 23S rRNA in the presence of protein L20. The protein is Large ribosomal subunit protein bL21 of Aeromonas salmonicida (strain A449).